The chain runs to 230 residues: Cytochrome c oxidase subunit 2 (230 aa).

Topologically, residues 1-14 (MAHPSQLGFQDAAS) are mitochondrial intermembrane. A helical transmembrane segment spans residues 15–45 (PVMEELLHFHDHALMIVLLISTLVLYIIVAM). At 46 to 59 (VSTKLTNKYILDSQ) the chain is on the mitochondrial matrix side. A helical transmembrane segment spans residues 60–87 (EIEIVWTVLPAVILILIALPSLRILYLM). Residues 88–230 (DEINDPHLTI…KWSTMMLEDA (143 aa)) are Mitochondrial intermembrane-facing. Cu cation contacts are provided by histidine 161, cysteine 196, glutamate 198, cysteine 200, histidine 204, and methionine 207. Mg(2+) is bound at residue glutamate 198.

This sequence belongs to the cytochrome c oxidase subunit 2 family. In terms of assembly, component of the cytochrome c oxidase (complex IV, CIV), a multisubunit enzyme composed of 14 subunits. The complex is composed of a catalytic core of 3 subunits MT-CO1, MT-CO2 and MT-CO3, encoded in the mitochondrial DNA, and 11 supernumerary subunits COX4I, COX5A, COX5B, COX6A, COX6B, COX6C, COX7A, COX7B, COX7C, COX8 and NDUFA4, which are encoded in the nuclear genome. The complex exists as a monomer or a dimer and forms supercomplexes (SCs) in the inner mitochondrial membrane with NADH-ubiquinone oxidoreductase (complex I, CI) and ubiquinol-cytochrome c oxidoreductase (cytochrome b-c1 complex, complex III, CIII), resulting in different assemblies (supercomplex SCI(1)III(2)IV(1) and megacomplex MCI(2)III(2)IV(2)). Found in a complex with TMEM177, COA6, COX18, COX20, SCO1 and SCO2. Interacts with TMEM177 in a COX20-dependent manner. Interacts with COX20. Interacts with COX16. The cofactor is Cu cation.

The protein localises to the mitochondrion inner membrane. The enzyme catalyses 4 Fe(II)-[cytochrome c] + O2 + 8 H(+)(in) = 4 Fe(III)-[cytochrome c] + 2 H2O + 4 H(+)(out). Functionally, component of the cytochrome c oxidase, the last enzyme in the mitochondrial electron transport chain which drives oxidative phosphorylation. The respiratory chain contains 3 multisubunit complexes succinate dehydrogenase (complex II, CII), ubiquinol-cytochrome c oxidoreductase (cytochrome b-c1 complex, complex III, CIII) and cytochrome c oxidase (complex IV, CIV), that cooperate to transfer electrons derived from NADH and succinate to molecular oxygen, creating an electrochemical gradient over the inner membrane that drives transmembrane transport and the ATP synthase. Cytochrome c oxidase is the component of the respiratory chain that catalyzes the reduction of oxygen to water. Electrons originating from reduced cytochrome c in the intermembrane space (IMS) are transferred via the dinuclear copper A center (CU(A)) of subunit 2 and heme A of subunit 1 to the active site in subunit 1, a binuclear center (BNC) formed by heme A3 and copper B (CU(B)). The BNC reduces molecular oxygen to 2 water molecules using 4 electrons from cytochrome c in the IMS and 4 protons from the mitochondrial matrix. This Salmo salar (Atlantic salmon) protein is Cytochrome c oxidase subunit 2 (mt-co2).